The primary structure comprises 267 residues: Cilia- and flagella-associated protein 300 (267 aa).

Belongs to the CFAP300 family. Interacts with DNAAF2.

The protein resides in the cytoplasm. Its subcellular location is the cytoskeleton. The protein localises to the cilium axoneme. In terms of biological role, cilium- and flagellum-specific protein that plays a role in axonemal structure organization and motility. May play a role in outer and inner dynein arm assembly. In Rattus norvegicus (Rat), this protein is Cilia- and flagella-associated protein 300.